The primary structure comprises 78 residues: Large ribosomal subunit protein bL28 (78 aa).

It belongs to the bacterial ribosomal protein bL28 family.

In Haemophilus influenzae (strain 86-028NP), this protein is Large ribosomal subunit protein bL28.